A 1728-amino-acid polypeptide reads, in one-letter code: Mitochondrial 3' processome subunit 1 (1728 aa).

The N-terminal 117 residues, 1 to 117, are a transit peptide targeting the mitochondrion; it reads MRRLILSQTL…AGKMTGSSRF (117 aa). 3 disordered regions span residues 45-71, 88-156, and 829-863; these read HRKR…SGDG, ESPV…IGQQ, and GCNR…PKGT.

Component of the mitochondrial 3' processome (MPsome) complex composed at least of terminal uridylyltransferase KRET1/TUT1, 3'-5' exonuclease DSS1, MPSS1, MPSS2 and MPSS3. Within the complex, interacts with KRET1.

It is found in the mitochondrion. As part of the mitochondrial 3' processome (MPsome), involved in the maturation of guided RNA (gRNA) precursors. The sequence is that of Mitochondrial 3' processome subunit 1 from Trypanosoma brucei brucei.